The following is a 120-amino-acid chain: Small ribosomal subunit protein uS13 (120 aa).

The segment at 93–120 (RRGLPCRGQKTKTNARTRKGKRKTVGAA) is disordered.

It belongs to the universal ribosomal protein uS13 family. Part of the 30S ribosomal subunit. Forms a loose heterodimer with protein S19. Forms two bridges to the 50S subunit in the 70S ribosome.

Located at the top of the head of the 30S subunit, it contacts several helices of the 16S rRNA. In the 70S ribosome it contacts the 23S rRNA (bridge B1a) and protein L5 of the 50S subunit (bridge B1b), connecting the 2 subunits; these bridges are implicated in subunit movement. Contacts the tRNAs in the A and P-sites. The protein is Small ribosomal subunit protein uS13 of Sulfurimonas denitrificans (strain ATCC 33889 / DSM 1251) (Thiomicrospira denitrificans (strain ATCC 33889 / DSM 1251)).